The sequence spans 196 residues: Transmembrane protein 52 (196 aa).

An N-terminal signal peptide occupies residues 1-28 (MAPGPSATQGILLLLPLLPLSQVTLGSA). Residues 47 to 67 (LWHVGLILLAILLMLLCGVTA) traverse the membrane as a helical segment. The interval 162-196 (EEVAAPSEKTNSLPEALEPETTGGPQEPGPSAQRP) is disordered.

The protein localises to the membrane. This Mus musculus (Mouse) protein is Transmembrane protein 52 (Tmem52).